A 234-amino-acid chain; its full sequence is Peptidase E (234 aa).

Residues serine 123, aspartate 138, and histidine 160 each act as charge relay system in the active site.

The protein belongs to the peptidase S51 family.

It is found in the cytoplasm. It catalyses the reaction Dipeptidase E catalyzes the hydrolysis of dipeptides Asp-|-Xaa. It does not act on peptides with N-terminal Glu, Asn or Gln, nor does it cleave isoaspartyl peptides.. Functionally, hydrolyzes dipeptides containing N-terminal aspartate residues. May play a role in allowing the cell to use peptide aspartate to spare carbon otherwise required for the synthesis of the aspartate family of amino acids. The polypeptide is Peptidase E (Pasteurella multocida (strain Pm70)).